A 401-amino-acid chain; its full sequence is Imidazolonepropionase (401 aa).

Fe(3+)-binding residues include His-70 and His-72. The Zn(2+) site is built by His-70 and His-72. Positions 79, 142, and 175 each coordinate 4-imidazolone-5-propanoate. Position 142 (Tyr-142) interacts with N-formimidoyl-L-glutamate. His-238 contacts Fe(3+). Residue His-238 coordinates Zn(2+). 4-imidazolone-5-propanoate is bound at residue Gln-241. Asp-313 contacts Fe(3+). Asp-313 lines the Zn(2+) pocket. Positions 315 and 317 each coordinate N-formimidoyl-L-glutamate. Thr-318 provides a ligand contact to 4-imidazolone-5-propanoate.

It belongs to the metallo-dependent hydrolases superfamily. HutI family. Zn(2+) serves as cofactor. Requires Fe(3+) as cofactor.

The protein resides in the cytoplasm. The enzyme catalyses 4-imidazolone-5-propanoate + H2O = N-formimidoyl-L-glutamate. It participates in amino-acid degradation; L-histidine degradation into L-glutamate; N-formimidoyl-L-glutamate from L-histidine: step 3/3. Functionally, catalyzes the hydrolytic cleavage of the carbon-nitrogen bond in imidazolone-5-propanoate to yield N-formimidoyl-L-glutamate. It is the third step in the universal histidine degradation pathway. In Xanthomonas oryzae pv. oryzae (strain MAFF 311018), this protein is Imidazolonepropionase.